Consider the following 417-residue polypeptide: Serine hydroxymethyltransferase (417 aa).

Position 54 is an N6-acetyllysine (lysine 54). (6S)-5,6,7,8-tetrahydrofolate-binding positions include leucine 121 and 125 to 127 (GHL). An N6-(pyridoxal phosphate)lysine modification is found at lysine 229. N6-acetyllysine is present on residues lysine 250, lysine 285, and lysine 354. 355-357 (SPF) is a binding site for (6S)-5,6,7,8-tetrahydrofolate. At lysine 375 the chain carries N6-acetyllysine.

The protein belongs to the SHMT family. In terms of assembly, homodimer. The cofactor is pyridoxal 5'-phosphate.

The protein localises to the cytoplasm. The catalysed reaction is (6R)-5,10-methylene-5,6,7,8-tetrahydrofolate + glycine + H2O = (6S)-5,6,7,8-tetrahydrofolate + L-serine. It functions in the pathway one-carbon metabolism; tetrahydrofolate interconversion. The protein operates within amino-acid biosynthesis; glycine biosynthesis; glycine from L-serine: step 1/1. Its function is as follows. Catalyzes the reversible interconversion of serine and glycine with tetrahydrofolate (THF) serving as the one-carbon carrier. This reaction serves as the major source of one-carbon groups required for the biosynthesis of purines, thymidylate, methionine, and other important biomolecules. Also exhibits THF-independent aldolase activity toward beta-hydroxyamino acids, producing glycine and aldehydes, via a retro-aldol mechanism. This is Serine hydroxymethyltransferase from Shigella dysenteriae serotype 1 (strain Sd197).